A 222-amino-acid chain; its full sequence is Uracil-DNA glycosylase (222 aa).

D66 acts as the Proton acceptor in catalysis.

It belongs to the uracil-DNA glycosylase (UDG) superfamily. UNG family.

It localises to the cytoplasm. The catalysed reaction is Hydrolyzes single-stranded DNA or mismatched double-stranded DNA and polynucleotides, releasing free uracil.. Excises uracil residues from the DNA which can arise as a result of misincorporation of dUMP residues by DNA polymerase or due to deamination of cytosine. This Porphyromonas gingivalis (strain ATCC 33277 / DSM 20709 / CIP 103683 / JCM 12257 / NCTC 11834 / 2561) protein is Uracil-DNA glycosylase.